Reading from the N-terminus, the 57-residue chain is Small ribosomal subunit protein eS27 (57 aa).

4 residues coordinate Zn(2+): Cys10, Cys13, Cys29, and Cys32. The segment at 10-32 (CGDCENEQVVFGKASSVVSCAVC) adopts a C4-type zinc-finger fold.

Belongs to the eukaryotic ribosomal protein eS27 family. As to quaternary structure, part of the 30S ribosomal subunit. Zn(2+) is required as a cofactor.

The protein is Small ribosomal subunit protein eS27 of Halorubrum lacusprofundi (strain ATCC 49239 / DSM 5036 / JCM 8891 / ACAM 34).